The chain runs to 234 residues: Sugar fermentation stimulation protein homolog (234 aa).

It belongs to the SfsA family.

This Enterobacter sp. (strain 638) protein is Sugar fermentation stimulation protein homolog.